Here is a 217-residue protein sequence, read N- to C-terminus: Non-structural protein NS3 (217 aa).

The protein belongs to the orbivirus NS3 family.

Its function is as follows. May play a role in the release of virions from infected cells. The sequence is that of Non-structural protein NS3 (Segment-10) from African horse sickness virus 9 (AHSV-9).